A 714-amino-acid chain; its full sequence is G protein-coupled receptor kinase 2 (714 aa).

Residues 1-308 (MELENIVANT…LEAQPITYKT (308 aa)) form an N-terminal region. RGS domains follow at residues 53–174 (YGYV…SQHS) and 177–294 (INHK…HRYL). A disordered region spans residues 141–229 (SNANPTETAE…GGGEGGGGGK (89 aa)). The span at 154-175 (CNNTTANNCNNINNSNNSQHSS) shows a compositional bias: low complexity. Basic and acidic residues-rich tracts occupy residues 176-190 (DINH…HNGD) and 199-220 (HQDD…EKGG). Residues 309–574 (FRMYRVLGKG…GQDVMAHPFF (266 aa)) enclose the Protein kinase domain. Residues 315–323 (LGKGGFGEV) and K338 contribute to the ATP site. D435 functions as the Proton acceptor in the catalytic mechanism. Residues 577 to 642 (TQLNWRRLEA…GSVSISWQNE (66 aa)) enclose the AGC-kinase C-terminal domain. S612 carries the post-translational modification Phosphoserine. The residue at position 613 (T613) is a Phosphothreonine. The tract at residues 667 to 714 (INAAPEPDKAGCFPFRRKKKQPARTQPIPIPEHLLTTSHSVSSTTVES) is disordered. The segment covering 698–714 (EHLLTTSHSVSSTTVES) has biased composition (low complexity).

It belongs to the protein kinase superfamily. AGC Ser/Thr protein kinase family. GPRK subfamily. In terms of tissue distribution, expressed in all larval tissues and in adult ovaries. Larval CNS staining is localized to axons projecting to the optic lobes and the mushroom bodies, in the longitudinal connectives, and in cell bodies and nerves of the ring gland corpus allatum. Adult CNS staining is detectable only in cell bodies and processes associated with the ellipsoid body of the central complex and portions of the mushroom bodies. In the wing disk, expression is confined to a stripe that parallels the anterior/posterior boundary of the wing blade and the hinge region, and weak expression in the prospective notum.

Its subcellular location is the membrane. The catalysed reaction is [G-protein-coupled receptor] + ATP = [G-protein-coupled receptor]-phosphate + ADP + H(+). Functionally, specifically phosphorylates the activated forms of G protein-coupled receptors. Required during oogenesis and embryogenesis; component of a signaling pathway that functions during egg chamber maturation. The polypeptide is G protein-coupled receptor kinase 2 (Gprk2) (Drosophila melanogaster (Fruit fly)).